The chain runs to 390 residues: Probable tRNA pseudouridine synthase D 2 (390 aa).

The active-site Nucleophile is Asp-93. The TRUD domain maps to 166–353 (YVLNYYGIQR…YGTRRKMVTP (188 aa)).

It belongs to the pseudouridine synthase TruD family.

It catalyses the reaction uridine(13) in tRNA = pseudouridine(13) in tRNA. Functionally, could be responsible for synthesis of pseudouridine from uracil-13 in transfer RNAs. This Methanococcus maripaludis (strain DSM 14266 / JCM 13030 / NBRC 101832 / S2 / LL) protein is Probable tRNA pseudouridine synthase D 2.